Here is a 169-residue protein sequence, read N- to C-terminus: Nucleoside diphosphate kinase 3-A (169 aa).

Residues K29, R105, T111, R122, V129, and N132 each contribute to the ADP site. Catalysis depends on H135, which acts as the Pros-phosphohistidine intermediate.

This sequence belongs to the NDK family. As to quaternary structure, homohexamer. Mg(2+) is required as a cofactor.

The protein localises to the mitochondrion outer membrane. It localises to the cytoplasm. The protein resides in the cytoskeleton. Its subcellular location is the cilium basal body. It carries out the reaction a 2'-deoxyribonucleoside 5'-diphosphate + ATP = a 2'-deoxyribonucleoside 5'-triphosphate + ADP. The enzyme catalyses a ribonucleoside 5'-diphosphate + ATP = a ribonucleoside 5'-triphosphate + ADP. Its function is as follows. Catalyzes the phosphorylation of ribonucleosides and deoxyribonucleoside diphosphates, other than ATP, into the corresponding triphosphates with ATP as the major phosphate donor. The ATP gamma phosphate is transferred to the nucleoside diphosphate beta phosphate via a ping-pong mechanism, using a phosphorylated active-site intermediate. Through the catalyzed exchange of gamma-phosphate between di- and triphosphonucleosides participates in regulation of intracellular nucleotide homeostasis. Required for ciliary function during renal development. Independently of its kinase activity, facilitates mitochondrial tethering prior to membrane fusion through its direct membrane-binding and hexamerization. Implicated in repair of both single- and double-stranded breaks in DNA, independently of its kinase activity. This chain is Nucleoside diphosphate kinase 3-A, found in Xenopus laevis (African clawed frog).